The following is a 566-amino-acid chain: Proline--tRNA ligase (566 aa).

It belongs to the class-II aminoacyl-tRNA synthetase family. ProS type 1 subfamily. In terms of assembly, homodimer.

It is found in the cytoplasm. It catalyses the reaction tRNA(Pro) + L-proline + ATP = L-prolyl-tRNA(Pro) + AMP + diphosphate. Catalyzes the attachment of proline to tRNA(Pro) in a two-step reaction: proline is first activated by ATP to form Pro-AMP and then transferred to the acceptor end of tRNA(Pro). As ProRS can inadvertently accommodate and process non-cognate amino acids such as alanine and cysteine, to avoid such errors it has two additional distinct editing activities against alanine. One activity is designated as 'pretransfer' editing and involves the tRNA(Pro)-independent hydrolysis of activated Ala-AMP. The other activity is designated 'posttransfer' editing and involves deacylation of mischarged Ala-tRNA(Pro). The misacylated Cys-tRNA(Pro) is not edited by ProRS. The protein is Proline--tRNA ligase of Shouchella clausii (strain KSM-K16) (Alkalihalobacillus clausii).